A 363-amino-acid polypeptide reads, in one-letter code: UDP-3-O-acylglucosamine N-acyltransferase (363 aa).

The active-site Proton acceptor is the H252.

This sequence belongs to the transferase hexapeptide repeat family. LpxD subfamily. As to quaternary structure, homotrimer.

The enzyme catalyses a UDP-3-O-[(3R)-3-hydroxyacyl]-alpha-D-glucosamine + a (3R)-hydroxyacyl-[ACP] = a UDP-2-N,3-O-bis[(3R)-3-hydroxyacyl]-alpha-D-glucosamine + holo-[ACP] + H(+). Its pathway is bacterial outer membrane biogenesis; LPS lipid A biosynthesis. Functionally, catalyzes the N-acylation of UDP-3-O-acylglucosamine using 3-hydroxyacyl-ACP as the acyl donor. Is involved in the biosynthesis of lipid A, a phosphorylated glycolipid that anchors the lipopolysaccharide to the outer membrane of the cell. This chain is UDP-3-O-acylglucosamine N-acyltransferase, found in Cupriavidus necator (strain ATCC 17699 / DSM 428 / KCTC 22496 / NCIMB 10442 / H16 / Stanier 337) (Ralstonia eutropha).